The sequence spans 299 residues: tRNA dimethylallyltransferase (299 aa).

ATP is bound at residue 10 to 17 (GPTAVGKT). Residue 12–17 (TAVGKT) coordinates substrate. The segment at 35-38 (DSQQ) is interaction with substrate tRNA.

This sequence belongs to the IPP transferase family. In terms of assembly, monomer. Mg(2+) serves as cofactor.

It carries out the reaction adenosine(37) in tRNA + dimethylallyl diphosphate = N(6)-dimethylallyladenosine(37) in tRNA + diphosphate. Catalyzes the transfer of a dimethylallyl group onto the adenine at position 37 in tRNAs that read codons beginning with uridine, leading to the formation of N6-(dimethylallyl)adenosine (i(6)A). This Streptococcus thermophilus (strain ATCC BAA-250 / LMG 18311) protein is tRNA dimethylallyltransferase.